We begin with the raw amino-acid sequence, 860 residues long: Pentatricopeptide repeat-containing protein At1g18900 (860 aa).

PPR repeat units lie at residues 363–397 (DGHT…GCQP), 398–432 (NTVT…GCKP), 433–467 (DRVT…GLSP), 468–502 (DTFT…GCTP), 503–537 (NLVT…GFEP), 538–572 (DKVT…NWIP), 573–607 (DEPV…GLRP), and 608–642 (NVPT…GLRP). The region spanning 760–843 (INLHVMSEGT…NSGCFVGSGE (84 aa)) is the Smr domain.

It belongs to the PPR family. P subfamily.

The protein is Pentatricopeptide repeat-containing protein At1g18900 of Arabidopsis thaliana (Mouse-ear cress).